A 350-amino-acid polypeptide reads, in one-letter code: Izumo sperm-egg fusion protein 1 (350 aa).

The first 21 residues, 1–21 (MGPHFTLLCAALAGCLLPAEG), serve as a signal peptide directing secretion. 5 cysteine pairs are disulfide-bonded: Cys-22-Cys-149, Cys-25-Cys-152, Cys-135-Cys-159, Cys-139-Cys-165, and Cys-182-Cys-233. The Extracellular portion of the chain corresponds to 22-292 (CVICDPSVVL…LQPEKMLASR (271 aa)). Residues 148-160 (WCKNCKKEVHACR) are important for interaction with IZUMO1R. Residues 167–251 (ERNVEVPQME…PATIINFHVT (85 aa)) form the Ig-like C2-type domain. N-linked (GlcNAc...) asparagine glycosylation occurs at Asn-204. A helical membrane pass occupies residues 293-313 (LLGLLICGSLALITGLTFAIF). The Cytoplasmic segment spans residues 314-350 (RRRKVIDFIKSSLFGLGSGAAEQTQVPKEKATDSRQQ). A Phosphoserine modification is found at Ser-325.

Belongs to the Izumo family. In terms of assembly, monomer, homodimer; disulfide-linked and homooligomer; depending on the context. Interacts with IZUMO1R/JUNO. IZUMO1 and IZUMO1R/JUNO form a complex with 1:1 stoichiometry. In gamete recognition, IZUMO1R/JUNO first binds to monomeric IZUMO1. The weak, but specific interaction with IZUMO1R/JUNO induces IZUMO1 homodimerization. The process follows a tight binding phase where IZUMO1 bends the entire structure towards the sperm membrane side through a thiol-disulfide exchange reaction. The molecule no longer binds to IZUMO1R/JUNO and instead binds to a putative second oocyte receptor. Interacts with ACE3. Part of a oolemmal binding multimeric complex (IZUMO1 complex) composed at least of IZUMO1 and GLIPR1L1; the complex assemblage is influenced by the maturation status of the male germ cell. Interacts with GLIPR1L1. Interacts with FREY; the interaction retains IZUMO1 at the endoplasmic reticulum membrane and coordinates IZUMO1 complex assembly. Interacts with FCRL3/MAIA (via extracellular domain); the interaction replaces IZUMO1R/JUNO as IZUMO1 receptor after sperm-egg adhesion. Interacts with WDR54. Forms a complex with SPACA6 and TMEM81 on spermatocyte cell membrane. N-glycosylated. Glycosylation is not essential for fusion and for proper protein trafficking in sperm. In terms of processing, phosphorylated. The cytoplasmic C-terminus is phosphorylated and undergoes phosphorylation changes during epididymal transit. In terms of tissue distribution, sperm-specific (at protein level). Detectable on sperm surface only after the acrosome reaction.

Its subcellular location is the cell membrane. The protein resides in the cytoplasmic vesicle. The protein localises to the secretory vesicle. It is found in the acrosome membrane. Its function is as follows. Essential sperm cell-surface protein required for fertilization by acting as a ligand for IZUMO1R/JUNO receptor on egg. The IZUMO1:IZUMO1R/JUNO interaction is a necessary adhesion event between sperm and egg that is required for fertilization but is not sufficient for cell fusion. The ligand-receptor interaction probably does not act as a membrane 'fusogen'. Acts a ligand for the human-specific oolemma epitope FCRL3/MAIA during fertilization. FCRL3/MAIA replaces IZUMO1R/JUNO as IZUMO1 receptor after sperm-egg adhesion, which permits species-specific gamete fusion. Plays a critical role in sperm-oolemma binding prior to plasma membrane fusion. Can mediate cell-cell fusion in cultured mammalian cells independently of its binding to IZUMO1R/JUNO. This is Izumo sperm-egg fusion protein 1 from Homo sapiens (Human).